The chain runs to 204 residues: Fruiting body protein SC7 (204 aa).

The first 16 residues, 1-16, serve as a signal peptide directing secretion; that stretch reads MKLTVILLTAVLAASA. The region spanning 62 to 185 is the SCP domain; it reads LKAHNNERAQ…KTLWYYVCNY (124 aa). Residues Asn80, Asn118, and Asn134 are each glycosylated (N-linked (GlcNAc...) asparagine).

The protein belongs to the CRISP family.

The protein resides in the secreted. The chain is Fruiting body protein SC7 (SC7) from Schizophyllum commune (Split gill fungus).